The chain runs to 97 residues: Nucleoid-associated protein Hac_0048 (97 aa).

Belongs to the YbaB/EbfC family. In terms of assembly, homodimer.

The protein localises to the cytoplasm. It is found in the nucleoid. Binds to DNA and alters its conformation. May be involved in regulation of gene expression, nucleoid organization and DNA protection. The sequence is that of Nucleoid-associated protein Hac_0048 from Helicobacter acinonychis (strain Sheeba).